The chain runs to 445 residues: Tubulin beta-5 chain (445 aa).

GTP-binding residues include glutamine 11, glutamate 69, serine 138, glycine 142, threonine 143, glycine 144, asparagine 204, and asparagine 226. Residue glutamate 69 coordinates Mg(2+). A disordered region spans residues 420–445 (AEYQQYQDATADDEYEEGEEEEEEAA). Acidic residues predominate over residues 429–445 (TADDEYEEGEEEEEEAA).

The protein belongs to the tubulin family. As to quaternary structure, dimer of alpha and beta chains. A typical microtubule is a hollow water-filled tube with an outer diameter of 25 nm and an inner diameter of 15 nM. Alpha-beta heterodimers associate head-to-tail to form protofilaments running lengthwise along the microtubule wall with the beta-tubulin subunit facing the microtubule plus end conferring a structural polarity. Microtubules usually have 13 protofilaments but different protofilament numbers can be found in some organisms and specialized cells. Requires Mg(2+) as cofactor.

It is found in the cytoplasm. The protein resides in the cytoskeleton. Its function is as follows. Tubulin is the major constituent of microtubules, a cylinder consisting of laterally associated linear protofilaments composed of alpha- and beta-tubulin heterodimers. Microtubules grow by the addition of GTP-tubulin dimers to the microtubule end, where a stabilizing cap forms. Below the cap, tubulin dimers are in GDP-bound state, owing to GTPase activity of alpha-tubulin. This Gossypium hirsutum (Upland cotton) protein is Tubulin beta-5 chain.